Consider the following 277-residue polypeptide: 3-methyl-2-oxobutanoate hydroxymethyltransferase (277 aa).

Positions 58 and 97 each coordinate Mg(2+). Residues 58–59, D97, and K127 contribute to the 3-methyl-2-oxobutanoate site; that span reads DS. A Mg(2+)-binding site is contributed by E129. The active-site Proton acceptor is the E195.

It belongs to the PanB family. As to quaternary structure, homodecamer; pentamer of dimers. Mg(2+) serves as cofactor.

Its subcellular location is the cytoplasm. It carries out the reaction 3-methyl-2-oxobutanoate + (6R)-5,10-methylene-5,6,7,8-tetrahydrofolate + H2O = 2-dehydropantoate + (6S)-5,6,7,8-tetrahydrofolate. It participates in cofactor biosynthesis; (R)-pantothenate biosynthesis; (R)-pantoate from 3-methyl-2-oxobutanoate: step 1/2. Its function is as follows. Catalyzes the reversible reaction in which hydroxymethyl group from 5,10-methylenetetrahydrofolate is transferred onto alpha-ketoisovalerate to form ketopantoate. The sequence is that of 3-methyl-2-oxobutanoate hydroxymethyltransferase from Leifsonia xyli subsp. xyli (strain CTCB07).